Here is a 661-residue protein sequence, read N- to C-terminus: Acetyl-coenzyme A synthetase (661 aa).

CoA contacts are provided by residues 199–202 (RGGK) and Thr-317. Residues 393–395 (GEP), 417–422 (DTFWQT), Asp-508, and Arg-523 contribute to the ATP site. A CoA-binding site is contributed by Ser-531. An ATP-binding site is contributed by Arg-534. Position 596 (Arg-596) interacts with CoA.

It belongs to the ATP-dependent AMP-binding enzyme family.

The enzyme catalyses acetate + ATP + CoA = acetyl-CoA + AMP + diphosphate. This is Acetyl-coenzyme A synthetase (ACS-1) from Coprinopsis cinerea (Inky cap fungus).